Consider the following 126-residue polypeptide: Probable DNA-directed RNA polymerase II subunit RPB11 (126 aa).

The protein belongs to the archaeal Rpo11/eukaryotic RPB11/RPC19 RNA polymerase subunit family. As to quaternary structure, component of the RNA polymerase II (Pol II) complex consisting of 12 subunits.

It localises to the nucleus. DNA-dependent RNA polymerase catalyzes the transcription of DNA into RNA using the four ribonucleoside triphosphates as substrates. Component of RNA polymerase II which synthesizes mRNA precursors and many functional non-coding RNAs. Pol II is the central component of the basal RNA polymerase II transcription machinery. It is composed of mobile elements that move relative to each other. RPB11 is part of the core element with the central large cleft. This chain is Probable DNA-directed RNA polymerase II subunit RPB11, found in Plasmodium falciparum (isolate 3D7).